The chain runs to 183 residues: Ribosome maturation factor RimM (183 aa).

The region spanning 104 to 183 (EGDYYWKDLI…TIEVDWDPGF (80 aa)) is the PRC barrel domain.

It belongs to the RimM family. As to quaternary structure, binds ribosomal protein uS19.

It is found in the cytoplasm. Functionally, an accessory protein needed during the final step in the assembly of 30S ribosomal subunit, possibly for assembly of the head region. Essential for efficient processing of 16S rRNA. May be needed both before and after RbfA during the maturation of 16S rRNA. It has affinity for free ribosomal 30S subunits but not for 70S ribosomes. This is Ribosome maturation factor RimM from Cronobacter sakazakii (strain ATCC BAA-894) (Enterobacter sakazakii).